A 209-amino-acid chain; its full sequence is Large ribosomal subunit protein uL3 (209 aa).

Residues 127–153 (NASRGPMSHGSKFHRAPGSMGAASDPS) form a disordered region.

It belongs to the universal ribosomal protein uL3 family. As to quaternary structure, part of the 50S ribosomal subunit. Forms a cluster with proteins L14 and L19.

In terms of biological role, one of the primary rRNA binding proteins, it binds directly near the 3'-end of the 23S rRNA, where it nucleates assembly of the 50S subunit. In Clostridium perfringens (strain SM101 / Type A), this protein is Large ribosomal subunit protein uL3.